Consider the following 121-residue polypeptide: Ribosome-binding factor A (121 aa).

This sequence belongs to the RbfA family. In terms of assembly, monomer. Binds 30S ribosomal subunits, but not 50S ribosomal subunits or 70S ribosomes.

It localises to the cytoplasm. Its function is as follows. One of several proteins that assist in the late maturation steps of the functional core of the 30S ribosomal subunit. Associates with free 30S ribosomal subunits (but not with 30S subunits that are part of 70S ribosomes or polysomes). Required for efficient processing of 16S rRNA. May interact with the 5'-terminal helix region of 16S rRNA. The chain is Ribosome-binding factor A from Paraburkholderia phytofirmans (strain DSM 17436 / LMG 22146 / PsJN) (Burkholderia phytofirmans).